We begin with the raw amino-acid sequence, 128 residues long: Small ribosomal subunit protein uS12 (128 aa).

Residues 1 to 25 (MPTIQQLIRRGRKTKASKTASPALE) form a disordered region. Asp-89 bears the 3-methylthioaspartic acid mark. Residues 101-128 (SLDTSGVADRRNSRSKYGAKRPKEAAAK) are disordered.

It belongs to the universal ribosomal protein uS12 family. As to quaternary structure, part of the 30S ribosomal subunit. Contacts proteins S8 and S17. May interact with IF1 in the 30S initiation complex.

In terms of biological role, with S4 and S5 plays an important role in translational accuracy. Functionally, interacts with and stabilizes bases of the 16S rRNA that are involved in tRNA selection in the A site and with the mRNA backbone. Located at the interface of the 30S and 50S subunits, it traverses the body of the 30S subunit contacting proteins on the other side and probably holding the rRNA structure together. The combined cluster of proteins S8, S12 and S17 appears to hold together the shoulder and platform of the 30S subunit. The sequence is that of Small ribosomal subunit protein uS12 from Chlorobium phaeobacteroides (strain BS1).